The sequence spans 454 residues: Cytochrome b-c1 complex subunit 2, mitochondrial (454 aa).

The N-terminal 35 residues, 1–35, are a transit peptide targeting the mitochondrion; sequence MISRSALSRGSQLALRRPAAAKTAQRGFAAAAASP.

The protein belongs to the peptidase M16 family. UQCRC2/QCR2 subfamily. In terms of assembly, component of the ubiquinol-cytochrome c oxidoreductase (cytochrome b-c1 complex, complex III, CIII), a multisubunit enzyme composed of 10 subunits. The complex is composed of 3 respiratory subunits cytochrome b (cob), cytochrome c1 (cyt-1) and Rieske protein (fes-1), 2 core protein subunits pep and ucr-1, and 5 low-molecular weight protein subunits qcr6, qcr7, qcr8, qcr9 and probably NCU16844/qcr10. The complex exists as an obligatory dimer and forms supercomplexes (SCs) in the inner mitochondrial membrane with NADH-ubiquinone oxidoreductase (complex I, CI) and cytochrome c oxidase (complex IV, CIV), resulting in different assemblies (supercomplexes SCI(1)III(2), SCIII(2)IV(1) and SCIII(2)IV(2) as well as higher order I(x)III(y)IV(z) megacomplexes).

It is found in the mitochondrion inner membrane. Component of the ubiquinol-cytochrome c oxidoreductase, a multisubunit transmembrane complex that is part of the mitochondrial electron transport chain which drives oxidative phosphorylation. The respiratory chain contains 3 multisubunit complexes succinate dehydrogenase (complex II, CII), ubiquinol-cytochrome c oxidoreductase (cytochrome b-c1 complex, complex III, CIII) and cytochrome c oxidase (complex IV, CIV), that cooperate to transfer electrons derived from NADH and succinate to molecular oxygen, creating an electrochemical gradient over the inner membrane that drives transmembrane transport and the ATP synthase. The cytochrome b-c1 complex catalyzes electron transfer from ubiquinol to cytochrome c, linking this redox reaction to translocation of protons across the mitochondrial inner membrane, with protons being carried across the membrane as hydrogens on the quinol. In the process called Q cycle, 2 protons are consumed from the matrix, 4 protons are released into the intermembrane space and 2 electrons are passed to cytochrome c. This chain is Cytochrome b-c1 complex subunit 2, mitochondrial (ucr-1), found in Neurospora crassa (strain ATCC 24698 / 74-OR23-1A / CBS 708.71 / DSM 1257 / FGSC 987).